The chain runs to 70 residues: DNA-directed RNA polymerase subunit omega (70 aa).

This sequence belongs to the RNA polymerase subunit omega family. As to quaternary structure, the RNAP catalytic core consists of 2 alpha, 1 beta, 1 beta' and 1 omega subunit. When a sigma factor is associated with the core the holoenzyme is formed, which can initiate transcription.

It carries out the reaction RNA(n) + a ribonucleoside 5'-triphosphate = RNA(n+1) + diphosphate. In terms of biological role, promotes RNA polymerase assembly. Latches the N- and C-terminal regions of the beta' subunit thereby facilitating its interaction with the beta and alpha subunits. The chain is DNA-directed RNA polymerase subunit omega from Staphylococcus epidermidis (strain ATCC 12228 / FDA PCI 1200).